Here is a 241-residue protein sequence, read N- to C-terminus: Cobalt transport protein CbiM (241 aa).

An N-terminal signal peptide occupies residues 1-23 (MKKNLTFFMVIALLFTITPNVYA). Helical transmembrane passes span 29 to 49 (GFLP…FIII), 66 to 86 (MLLG…IPSV), 98 to 118 (LSAI…VLIF), 121 to 141 (ILLA…MGIM), 160 to 180 (VAVF…TSVQ), and 202 to 222 (IFSI…VIIF).

The protein belongs to the CbiM family. Forms an energy-coupling factor (ECF) transporter complex composed of an ATP-binding protein (A component, CbiO), a transmembrane protein (T component, CbiQ) and 2 possible substrate-capture proteins (S components, CbiM and CbiN) of unknown stoichimetry.

It localises to the cell membrane. It participates in cofactor biosynthesis; adenosylcobalamin biosynthesis. In terms of biological role, part of the energy-coupling factor (ECF) transporter complex CbiMNOQ involved in cobalt import. This chain is Cobalt transport protein CbiM, found in Clostridium tetani (strain Massachusetts / E88).